A 124-amino-acid chain; its full sequence is uncharacterized protein (124 aa).

Its function is as follows. This protein may be involved in virus assembly. This is an uncharacterized protein from Sulfolobus spindle-shape virus 1 (SSV1).